The sequence spans 354 residues: Release factor glutamine methyltransferase (354 aa).

S-adenosyl-L-methionine is bound by residues 174 to 178 (GSGSG), Asp197, and Asn241. 241–244 (NPPY) is a binding site for substrate.

This sequence belongs to the protein N5-glutamine methyltransferase family. PrmC subfamily.

It carries out the reaction L-glutaminyl-[peptide chain release factor] + S-adenosyl-L-methionine = N(5)-methyl-L-glutaminyl-[peptide chain release factor] + S-adenosyl-L-homocysteine + H(+). Methylates the class 1 translation termination release factors RF1/PrfA and RF2/PrfB on the glutamine residue of the universally conserved GGQ motif. The polypeptide is Release factor glutamine methyltransferase (Fusobacterium nucleatum subsp. nucleatum (strain ATCC 25586 / DSM 15643 / BCRC 10681 / CIP 101130 / JCM 8532 / KCTC 2640 / LMG 13131 / VPI 4355)).